The primary structure comprises 453 residues: Ribosomal protein uS12 methylthiotransferase RimO (453 aa).

In terms of domain architecture, MTTase N-terminal spans 3-118 (KKVGIISLGC…IAKVIEEFYS (116 aa)). Positions 12, 48, 81, 162, 166, and 169 each coordinate [4Fe-4S] cluster. Residues 148–378 (STNSGYAYLK…MQLQKEIVQR (231 aa)) form the Radical SAM core domain. One can recognise a TRAM domain in the interval 381–449 (ESRLEKVYKT…DYDLIGEVIN (69 aa)).

It belongs to the methylthiotransferase family. RimO subfamily. It depends on [4Fe-4S] cluster as a cofactor.

It localises to the cytoplasm. It catalyses the reaction L-aspartate(89)-[ribosomal protein uS12]-hydrogen + (sulfur carrier)-SH + AH2 + 2 S-adenosyl-L-methionine = 3-methylsulfanyl-L-aspartate(89)-[ribosomal protein uS12]-hydrogen + (sulfur carrier)-H + 5'-deoxyadenosine + L-methionine + A + S-adenosyl-L-homocysteine + 2 H(+). Functionally, catalyzes the methylthiolation of an aspartic acid residue of ribosomal protein uS12. This Acetivibrio thermocellus (strain ATCC 27405 / DSM 1237 / JCM 9322 / NBRC 103400 / NCIMB 10682 / NRRL B-4536 / VPI 7372) (Clostridium thermocellum) protein is Ribosomal protein uS12 methylthiotransferase RimO.